We begin with the raw amino-acid sequence, 91 residues long: Small ribosomal subunit protein uS19 (91 aa).

It belongs to the universal ribosomal protein uS19 family.

Functionally, protein S19 forms a complex with S13 that binds strongly to the 16S ribosomal RNA. The chain is Small ribosomal subunit protein uS19 from Opitutus terrae (strain DSM 11246 / JCM 15787 / PB90-1).